Here is a 415-residue protein sequence, read N- to C-terminus: NPL4-like protein (415 aa).

The MPN domain maps to 130–279; sequence AASFDRDSAN…FEAFQMSEIC (150 aa).

It belongs to the NPL4 family.

It localises to the endoplasmic reticulum. Its pathway is protein degradation; proteasomal ubiquitin-dependent pathway. In terms of biological role, may be part of a complex that binds ubiquitinated proteins and that is necessary for the export of misfolded proteins from the ER to the cytoplasm, where they are degraded by the proteasome. This is NPL4-like protein from Oryza sativa subsp. japonica (Rice).